Reading from the N-terminus, the 89-residue chain is Sec-independent protein translocase protein TatA (89 aa).

A helical transmembrane segment spans residues 1–21 (MFGLSPAQLIILLVVILLIFG).

It belongs to the TatA/E family. In terms of assembly, the Tat system comprises two distinct complexes: a TatABC complex, containing multiple copies of TatA, TatB and TatC subunits, and a separate TatA complex, containing only TatA subunits. Substrates initially bind to the TatABC complex, which probably triggers association of the separate TatA complex to form the active translocon.

The protein localises to the cell inner membrane. In terms of biological role, part of the twin-arginine translocation (Tat) system that transports large folded proteins containing a characteristic twin-arginine motif in their signal peptide across membranes. TatA could form the protein-conducting channel of the Tat system. The sequence is that of Sec-independent protein translocase protein TatA from Haemophilus influenzae (strain ATCC 51907 / DSM 11121 / KW20 / Rd).